Consider the following 109-residue polypeptide: MFGKGGIGNLMKQAQQMQEKMQQMQEEVANLEVTGESGAGLVKITINGAHNCRRVEIDPSLMEDDKEMLEDLIAAAFNDAARRIAETQKEKMAAVSSGMQLPPGFKMPF.

It belongs to the YbaB/EbfC family. As to quaternary structure, homodimer.

Its subcellular location is the cytoplasm. The protein resides in the nucleoid. Binds to DNA and alters its conformation. May be involved in regulation of gene expression, nucleoid organization and DNA protection. This chain is Nucleoid-associated protein PC1_1077, found in Pectobacterium carotovorum subsp. carotovorum (strain PC1).